Reading from the N-terminus, the 620-residue chain is Chaperone protein HscA homolog (620 aa).

The protein belongs to the heat shock protein 70 family.

Its function is as follows. Chaperone involved in the maturation of iron-sulfur cluster-containing proteins. Has a low intrinsic ATPase activity which is markedly stimulated by HscB. This chain is Chaperone protein HscA homolog, found in Neisseria meningitidis serogroup A / serotype 4A (strain DSM 15465 / Z2491).